The primary structure comprises 386 residues: Cytochrome b (386 aa).

Transmembrane regions (helical) follow at residues 39 to 59 (FGSL…FLAM), 83 to 104 (FMLK…YIHM), 119 to 139 (WNIG…GYVL), and 184 to 204 (FFSL…LHIL). Positions 89 and 103 each coordinate heme b. Heme b is bound by residues histidine 188 and histidine 202. Position 207 (histidine 207) interacts with a ubiquinone. The next 4 membrane-spanning stretches (helical) occupy residues 232-252 (YKDL…CYFM), 294-314 (LGGV…PFIH), 326-346 (LGKI…WLGA), and 353-374 (YIMI…LVPL).

The protein belongs to the cytochrome b family. The main subunits of complex b-c1 are: cytochrome b, cytochrome c1 and the Rieske protein. Requires heme b as cofactor.

It is found in the mitochondrion inner membrane. Functionally, component of the ubiquinol-cytochrome c reductase complex (complex III or cytochrome b-c1 complex) that is part of the mitochondrial respiratory chain. The b-c1 complex mediates electron transfer from ubiquinol to cytochrome c. Contributes to the generation of a proton gradient across the mitochondrial membrane that is then used for ATP synthesis. The sequence is that of Cytochrome b (MT-CYB) from Sarcophyton glaucum (Toadstool umbrella leather coral).